A 240-amino-acid chain; its full sequence is LexA repressor (240 aa).

Residues 26–46 (FDEMKEALDLASKSGIHRLIT) constitute a DNA-binding region (H-T-H motif). Residues Ser161 and Lys199 each act as for autocatalytic cleavage activity in the active site.

Belongs to the peptidase S24 family. As to quaternary structure, homodimer.

It catalyses the reaction Hydrolysis of Ala-|-Gly bond in repressor LexA.. Functionally, represses a number of genes involved in the response to DNA damage (SOS response), including recA and lexA. In the presence of single-stranded DNA, RecA interacts with LexA causing an autocatalytic cleavage which disrupts the DNA-binding part of LexA, leading to derepression of the SOS regulon and eventually DNA repair. The chain is LexA repressor from Brucella melitensis biotype 1 (strain ATCC 23456 / CCUG 17765 / NCTC 10094 / 16M).